A 299-amino-acid chain; its full sequence is Protease HtpX homolog (299 aa).

A run of 2 helical transmembrane segments spans residues 19–39 (LFIV…VWYF) and 41–61 (WGIT…WIAY). His146 provides a ligand contact to Zn(2+). Glu147 is an active-site residue. Position 150 (His150) interacts with Zn(2+). A run of 2 helical transmembrane segments spans residues 156-176 (ILLM…RDVF) and 198-218 (IILL…VLII). Glu227 provides a ligand contact to Zn(2+).

Belongs to the peptidase M48B family. The cofactor is Zn(2+).

Its subcellular location is the cell membrane. The protein is Protease HtpX homolog of Caldanaerobacter subterraneus subsp. tengcongensis (strain DSM 15242 / JCM 11007 / NBRC 100824 / MB4) (Thermoanaerobacter tengcongensis).